A 351-amino-acid polypeptide reads, in one-letter code: Lipoyl synthase (351 aa).

Residues Met1–Val10 are compositionally biased toward polar residues. The tract at residues Met1–Arg27 is disordered. A compositionally biased stretch (low complexity) spans Pro14–Pro24. [4Fe-4S] cluster is bound by residues Cys74, Cys79, Cys85, Cys100, Cys104, Cys107, and Ser311. The Radical SAM core domain maps to Trp86–Ser300.

Belongs to the radical SAM superfamily. Lipoyl synthase family. The cofactor is [4Fe-4S] cluster.

The protein localises to the cytoplasm. It catalyses the reaction [[Fe-S] cluster scaffold protein carrying a second [4Fe-4S](2+) cluster] + N(6)-octanoyl-L-lysyl-[protein] + 2 oxidized [2Fe-2S]-[ferredoxin] + 2 S-adenosyl-L-methionine + 4 H(+) = [[Fe-S] cluster scaffold protein] + N(6)-[(R)-dihydrolipoyl]-L-lysyl-[protein] + 4 Fe(3+) + 2 hydrogen sulfide + 2 5'-deoxyadenosine + 2 L-methionine + 2 reduced [2Fe-2S]-[ferredoxin]. The protein operates within protein modification; protein lipoylation via endogenous pathway; protein N(6)-(lipoyl)lysine from octanoyl-[acyl-carrier-protein]: step 2/2. Functionally, catalyzes the radical-mediated insertion of two sulfur atoms into the C-6 and C-8 positions of the octanoyl moiety bound to the lipoyl domains of lipoate-dependent enzymes, thereby converting the octanoylated domains into lipoylated derivatives. The sequence is that of Lipoyl synthase from Tropheryma whipplei (strain TW08/27) (Whipple's bacillus).